The primary structure comprises 2341 residues: Pecanex-like protein 1 (2341 aa).

The next 2 helical transmembrane spans lie at Ala28 to Tyr50 and Met57 to Leu74. Residues Phe98–Arg163 are disordered. Asn109 carries an N-linked (GlcNAc...) asparagine glycan. The segment covering Ser143–Arg163 has biased composition (polar residues). An N-linked (GlcNAc...) asparagine glycan is attached at Asn215. Disordered stretches follow at residues His270–Pro294, Asp311–Glu331, and Asp344–Arg689. The span at His272 to Gly282 shows a compositional bias: basic residues. 2 stretches are compositionally biased toward polar residues: residues Lys320–Glu331 and Ile347–Ser356. N-linked (GlcNAc...) asparagine glycosylation is present at Asn348. Positions Ser370–Gly388 are enriched in low complexity. A glycan (N-linked (GlcNAc...) asparagine) is linked at Asn394. The span at Asn394–Gln404 shows a compositional bias: polar residues. Basic and acidic residues-rich tracts occupy residues Lys430–Ala455, His465–Asn478, and Ser527–Pro544. Over residues Ala554–Ala569 the composition is skewed to basic residues. Low complexity predominate over residues Gln605 to Ser635. Asn702 carries an N-linked (GlcNAc...) asparagine glycan. The disordered stretch occupies residues Gln756–Arg834. Low complexity predominate over residues Leu814–Gln832. 2 N-linked (GlcNAc...) asparagine glycosylation sites follow: Asn852 and Asn863. 3 helical membrane-spanning segments follow: residues Ile1003 to Ile1025, Ile1032 to Leu1049, and Ile1067 to Ser1089. A glycan (N-linked (GlcNAc...) asparagine) is linked at Asn1091. Residues Phe1110–Leu1132 traverse the membrane as a helical segment. Asn1155 is a glycosylation site (N-linked (GlcNAc...) asparagine). Transmembrane regions (helical) follow at residues Leu1160–Tyr1182, Ile1194–Ser1213, Leu1266–Leu1288, and Val1295–Pro1312. N-linked (GlcNAc...) asparagine glycosylation is found at Asn1579, Asn1720, Asn1982, Asn2062, and Asn2072. Disordered stretches follow at residues Asn2062–Arg2120 and Gly2217–His2237. Polar residues-rich tracts occupy residues Pro2069–Ile2078, Tyr2096–Val2114, and Gly2217–Ser2236. N-linked (GlcNAc...) asparagine glycosylation is found at Asn2234 and Asn2260.

It belongs to the pecanex family.

It is found in the membrane. The polypeptide is Pecanex-like protein 1 (Homo sapiens (Human)).